We begin with the raw amino-acid sequence, 221 residues long: Deoxyribose-phosphate aldolase (221 aa).

Asp-90 functions as the Proton donor/acceptor in the catalytic mechanism. Catalysis depends on Lys-152, which acts as the Schiff-base intermediate with acetaldehyde. Residue Lys-181 is the Proton donor/acceptor of the active site.

It belongs to the DeoC/FbaB aldolase family. DeoC type 1 subfamily.

It localises to the cytoplasm. The catalysed reaction is 2-deoxy-D-ribose 5-phosphate = D-glyceraldehyde 3-phosphate + acetaldehyde. The protein operates within carbohydrate degradation; 2-deoxy-D-ribose 1-phosphate degradation; D-glyceraldehyde 3-phosphate and acetaldehyde from 2-deoxy-alpha-D-ribose 1-phosphate: step 2/2. In terms of biological role, catalyzes a reversible aldol reaction between acetaldehyde and D-glyceraldehyde 3-phosphate to generate 2-deoxy-D-ribose 5-phosphate. This is Deoxyribose-phosphate aldolase from Exiguobacterium sp. (strain ATCC BAA-1283 / AT1b).